Consider the following 204-residue polypeptide: Large ribosomal subunit protein uL4 (204 aa).

Positions 53–77 are disordered; it reads ISDVSGTTAKPYSQKRTGRARQGSL. Over residues 56–67 the composition is skewed to polar residues; that stretch reads VSGTTAKPYSQK.

Belongs to the universal ribosomal protein uL4 family. In terms of assembly, part of the 50S ribosomal subunit.

In terms of biological role, one of the primary rRNA binding proteins, this protein initially binds near the 5'-end of the 23S rRNA. It is important during the early stages of 50S assembly. It makes multiple contacts with different domains of the 23S rRNA in the assembled 50S subunit and ribosome. Its function is as follows. Forms part of the polypeptide exit tunnel. The polypeptide is Large ribosomal subunit protein uL4 (Wolbachia sp. subsp. Brugia malayi (strain TRS)).